We begin with the raw amino-acid sequence, 577 residues long: Leucine-rich repeat protein soc-2 homolog (577 aa).

Basic and acidic residues-rich tracts occupy residues 1–10 and 33–48; these read MRRTKGRTDS and STAH…EAKK. Residues 1–71 are disordered; that stretch reads MRRTKGRTDS…PTVKKRSTPS (71 aa). 20 LRR repeats span residues 87-109, 110-131, 133-155, 156-177, 179-201, 202-223, 225-246, 248-269, 271-292, 294-315, 318-339, 342-363, 366-387, 389-410, 412-434, 435-456, 458-479, 481-502, 504-526, and 528-549; these read GATR…KELT, SLRE…VGLL, NLET…VKLT, KLKV…IYKL, TLTT…GNLK, LLER…IGQL, HLVT…IGNC, HMTS…IGRL, AMTR…LANC, GIDE…LLSS, NLTS…PPKQ, QVNT…VFNK, YLSK…FGSW, SLVE…IQWL, NLEV…GALR, KLRV…IEYL, SLER…IGYL, SVTY…IGNM, SLEQ…LVLC, and SLQI…IVAG.

It belongs to the SHOC2 family.

Its function is as follows. Acts as a Ras effector and participates in MAPK pathway activation. Probably acts as a scaffolding protein in a protein phosphatase complex that specifically dephosphorylates Raf kinase and stimulate Raf activity at specialized signaling complexes upon Ras activation. This Nematostella vectensis (Starlet sea anemone) protein is Leucine-rich repeat protein soc-2 homolog.